A 612-amino-acid polypeptide reads, in one-letter code: MASMSVDPVTEPRMYQQTLLQDGLCDLLDANKFVDCILKIKDKEFPCHRLVLAATSPYFKAMFLSDLEESKKREIVLKDIEPGVMGMILRYIYTSDINLTEQNVQDIFMAANMYQIPSIFSVCVSYLQQKLVLSNCLAIFRLGLLLDCPRLAMEARDFICDRYLLIIRDQDFHQLGPSELAAIITCDSLNVEREESVFESLMDWVEYDTDERTKELPELLHCVRFRLMPTSYFKEKVEGHRLIRTNQELKKELQLIKDAQKGLLHRVKRSSHRKEGKSAEFESDDDDEDGLLPGILNDNPRFGMFQSDLILMINDAGTVAYDVGANECFVASSSTEIPKNHCSLVTKENQIFVVGGLRYNEENKDQPFSSYFLQFDPMSSEWLGMPSLPNPRCLFGLVEAENSIYVVGGKELKEGERALDSVMIYDRQSFKWGESDPLPYAVYGHGIVSHKGLVYVIGGKTESKKCLRRVCVYDPSKFEWKDLAPMKTARSLFGTAVHKNKIYVVTGVTDNGLTSTVEVYDIASNSWSEFVDFPQERSSLNLVELGGFLYAIGGFAMMPNETTEKLEPTEMNDIWKFDEEENCWNGILREIRYAAGATVLGVRLNTLRLTKI.

One can recognise a BTB domain in the interval 34–101; that stretch reads VDCILKIKDK…IYTSDINLTE (68 aa). The region spanning 136-238 is the BACK domain; that stretch reads CLAIFRLGLL…PTSYFKEKVE (103 aa). Residues 266 to 275 are compositionally biased toward basic residues; it reads RVKRSSHRKE. Positions 266–290 are disordered; that stretch reads RVKRSSHRKEGKSAEFESDDDDEDG. A compositionally biased stretch (acidic residues) spans 281 to 290; that stretch reads FESDDDDEDG. Kelch repeat units lie at residues 350–402, 403–452, 453–500, 502–547, and 549–604; these read QIFV…EAEN, SIYV…SHKG, LVYV…VHKN, IYVV…ELGG, and LYAI…GVRL.

Belongs to the KLHL40 family. As to quaternary structure, component of the BCR(KLHL40) E3 ubiquitin ligase complex. As to expression, expressed in skeletal muscle and heart. Detected, although at much lower levels, in brain, eye and fin.

The protein resides in the cytoplasm. It is found in the myofibril. It localises to the sarcomere. Its subcellular location is the a band. The protein localises to the i band. In terms of biological role, substrate-specific adapter of a BCR (BTB-CUL3-RBX1) E3 ubiquitin ligase complex. Required for skeletal muscle development. The sequence is that of Kelch-like protein 40a (klhl40a) from Danio rerio (Zebrafish).